The sequence spans 581 residues: MKTACFPVFRNRLPDLDRDLDRDTKRVCGIKLTHDGAIAVVEDGRLVFCTEQEKRNNNSRYQEINNLDAVVAALAENGVNARDVDQFVIDGWDGEAESRFKVLSGETPVILRGAPYVERHAEGLLDWIGGSGLTLGDRVFSYRSYPHVTSHVASAYCTSPFAKSGDPALCLVWDGCIFPQLYHVEGKRASFVKSLFPVTGQAYAAAGHYFGPYKQTSRGGWDLGVAGKLMAFVALGSVHVRIVAVFQKLYQEHFAGDTALACAFRANINNSESSLAAVHDFFAASALQLGQRRPKTCLHRLIFSSNVSSLTKWRTLQHHPLPGARNLCIAGGCGLNIKWNSALRQTGLFDSVWVPPFPNDSGSAIGAACCEIVAQQGFVPLDWSVYSGPSLQDRQVPAGWHASPCSISEVAAILASNKPVVFLSGRTELGPRALGGRSILAAATSPEMKDHLNEIKFREHFRPVAPICLEDRAPDIFSPGTPDPYMLFDHQTKMPWQDKVPAVVHLDGSARLQTISRNSQHKVAEVLVEYEKLTGIPLLCNTSANYHGRGFFPSAAAACEWGRVEHVWCDGMLYRKPSATA.

It belongs to the NodU/CmcH family.

Functionally, involved in 6-O-carbamoylation of Nod-factors. This Rhizobium fredii (Sinorhizobium fredii) protein is Nodulation protein U (nodU).